Consider the following 1036-residue polypeptide: Non-canonical non-ribosomal peptide synthetase FUB8 (1036 aa).

The segment at 21–343 (EIARDEPDRV…LASVVTHPDE (323 aa)) is adenylation (A) domain. The region spanning 544-621 (TTEDVVRSGI…QLAHTVWSHL (78 aa)) is the Carrier domain. The residue at position 579 (Ser-579) is an O-(pantetheine 4'-phosphoryl)serine. The segment at 658–899 (LTGTTGEIGS…IPIDLLTEVI (242 aa)) is thioester reductase (TR) domain.

Its pathway is mycotoxin biosynthesis. Its function is as follows. Non-canonical non-ribosomal peptide synthetase; part of the gene cluster that mediates the biosynthesis of fusaric acid, a mycotoxin with low to moderate toxicity to animals and humans, but with high phytotoxic properties. L-aspartate is suggested as fusaric acid amino acid precursor that is activated and further processed to O-acetyl-L-homoserine by cluster enzymes aspartate kinase FUB3 and homoserine O-acetyltransferase FUB5, as well as enzymes of the primary metabolism. The polyketide synthase (PKS) FUB1 generates the triketide trans-2-hexenal which is presumptively released by the hydrolase FUB4 and linked to the NRPS-bound amino acid precursor by NAD(P)-dependent dehydrogenase FUB6. FUB1, FUB4, and the non-canonical NRPS Fub8 may form an enzyme complex. Further processing of the NRPS-bound intermediate might be carried out by FUB6 and the sulfhydrylase FUB7, enabling a spontaneous electrocyclization to close the carbon backbone of fusaric acid. Dihydrofusaric acid is likely to be released via reduction by the thioester reductase (TR) domain of FUB8 whereupon the final oxidation to fusaric acid may (also) be performed by the FMN-dependent dehydrogenase FUB9. In Fusarium oxysporum f. sp. lycopersici (strain 4287 / CBS 123668 / FGSC 9935 / NRRL 34936) (Fusarium vascular wilt of tomato), this protein is Non-canonical non-ribosomal peptide synthetase FUB8.